Reading from the N-terminus, the 23-residue chain is Phallacidin proprotein 1 (23 aa).

Residue P1 is a propeptide. The segment at residues 2-8 is a cross-link (cyclopeptide (Ala-Pro)); it reads AWLVDCP. The 2'-cysteinyl-6'-hydroxytryptophan sulfoxide (Trp-Cys) cross-link spans 3-7; it reads WLVDC. A propeptide spanning residues 9–23 is cleaved from the precursor; sequence CVGDDINRLLTRGEK.

Belongs to the MSDIN fungal toxin family. In terms of processing, processed by the macrocyclase-peptidase enzyme POPB to yield a toxic cyclic heptapeptide. POPB first removes 10 residues from the N-terminus. Conformational trapping of the remaining peptide forces the enzyme to release this intermediate rather than proceed to macrocyclization. The enzyme rebinds the remaining peptide in a different conformation and catalyzes macrocyclization of the N-terminal 7 residues.

Functionally, major toxin that belongs to the bicyclic heptapeptides called phallotoxins. Although structurally related to amatoxins, phallotoxins have a different mode of action, which is the stabilization of F-actin. Phallotoxins are poisonous when administered parenterally, but not orally because of poor absorption. In Amanita phalloides (Death cap), this protein is Phallacidin proprotein 1.